The primary structure comprises 450 residues: MLKNNEILETISMIKEQNLDVRTITLGLSLMDCACEDVKVLSEKIYDKITKTAENLVKTGEDIEKRFGIPIINKRISVTPISIVAASCNCNSYLDIAKAMDKAAKEVGVDFIGGFSALVHKGFTNSDLKLIKSLPESLANTDIVCSSVNIGSTRYGINMDAVKLMGETIKETSLITPDGFGCAKLVVFCNAVEDNPFMAGAFHGVGEAEKVINVGVSGPGVVKKALEEVRGKSFEEVAETIKKTSFKVTRMGQLVAKEASKLMDIPFGIVDLSLAPTPAVGDSVGRVLEEMGLSNCGTHGTTAALALLNDAVKKGGLMASSYVGGLSGAFIPVSEDECMIEQSKNGFLTIEKLEAMTCVCSVGLDMIAIPGKTSASTISGIIADEAAIGMINNKTTAVRIIPVPNKDIGDIVEFGGLLGSAPIMRVSPGNCDDFISRGGRIPAPVHSLKN.

It belongs to the UPF0210 family. Homodimer.

The sequence is that of UPF0210 protein CPF_1748 from Clostridium perfringens (strain ATCC 13124 / DSM 756 / JCM 1290 / NCIMB 6125 / NCTC 8237 / Type A).